A 274-amino-acid polypeptide reads, in one-letter code: Ribosomal RNA small subunit methyltransferase A (274 aa).

S-adenosyl-L-methionine contacts are provided by His15, Leu17, Gly42, Glu64, Asp89, and Asn109.

Belongs to the class I-like SAM-binding methyltransferase superfamily. rRNA adenine N(6)-methyltransferase family. RsmA subfamily.

The protein resides in the cytoplasm. The catalysed reaction is adenosine(1518)/adenosine(1519) in 16S rRNA + 4 S-adenosyl-L-methionine = N(6)-dimethyladenosine(1518)/N(6)-dimethyladenosine(1519) in 16S rRNA + 4 S-adenosyl-L-homocysteine + 4 H(+). In terms of biological role, specifically dimethylates two adjacent adenosines (A1518 and A1519) in the loop of a conserved hairpin near the 3'-end of 16S rRNA in the 30S particle. May play a critical role in biogenesis of 30S subunits. The protein is Ribosomal RNA small subunit methyltransferase A of Synechococcus sp. (strain CC9605).